Consider the following 140-residue polypeptide: Pro-vaccinia growth factor (140 aa).

An N-terminal signal peptide occupies residues 1-18 (MLINYLMLLFAAMIIRSF). Residues 19–100 (ADSGNAIETT…SEKPNTTTSY (82 aa)) are Extracellular-facing. Asn34 carries an N-linked (GlcNAc...) asparagine; by host glycan. Residues 41–81 (AIRLCGPEGDGYCLHGDCIHARDIDGMYCRCSHGYTGIRCQ) form the EGF-like domain. 3 disulfide bridges follow: Cys45/Cys58, Cys53/Cys69, and Cys71/Cys80. Asn95 carries an N-linked (GlcNAc...) asparagine; by host glycan. The helical transmembrane segment at 101–121 (IPSPGIMLVLVGIIIITCCLL) threads the bilayer. Residues 122 to 140 (SVYRFTRRTKLPLQDMVVP) lie on the Cytoplasmic side of the membrane.

It belongs to the orthopoxvirus OPG019 family. Vaccinia growth factor interacts with host EGFR and promotes EGFR dimerization.

The protein resides in the host membrane. The protein localises to the secreted. Functionally, stimulates cellular proliferation (hyperplasia)and mobility around infected cells to promote rapid and efficient spread of infection. This effect is beneficial for virus replication in vivo, because poxviruses replicate possibly better in proliferating cells than in quiescent cells. Acts by binding host EGFR, inducing its dimerization, autophosphorylation and leading to activation of several cellular pathways regulating cell proliferation or cell survival. The activation by host EGFR of mitogen activated protein kinases (MAPK) and extracellular-signal regulated kinases (ERK) are essential for the positive effect of vaccinia growth factor on poxvirus virulence in vivo. In Homo sapiens (Human), this protein is Pro-vaccinia growth factor (OPG019).